A 555-amino-acid polypeptide reads, in one-letter code: La-related protein 7 (555 aa).

An HTH La-type RNA-binding domain is found at 36–127; sequence RSRVKQLLSD…RRKEPLGETP (92 aa). Residues 133–211 form the RRM domain; the sequence is RTVYVELLPK…PRKPGIFPKT (79 aa). Residues 218–327 form a disordered region; that stretch reads PFDAVTQDND…ENKDEELNSL (110 aa). 3 stretches are compositionally biased toward polar residues: residues 238-251, 258-274, and 284-293; these read KNSTSEETGSNNMD, STVTSEPNLATLTSTVS, and SQSFEASSGE. The stretch at 295-356 forms a coiled coil; it reads QFEMSSKMRK…ERLKVGEEVI (62 aa). A compositionally biased stretch (basic and acidic residues) spans 303-327; that stretch reads RKVEEEKSELKDLSSENKDEELNSL. In terms of domain architecture, xRRM spans 425–538; that stretch reads EFLSGVIVKI…TEKLISKAEK (114 aa).

The protein belongs to the LARP7 family. Core component of the 7SK RNP complex. Associates with box C/D small nucleolar ribonucleoprotein (snoRNP) complexes.

Its subcellular location is the nucleus. The protein resides in the nucleoplasm. In terms of biological role, RNA-binding protein that specifically binds distinct small nuclear RNA (snRNAs) and regulates their processing and function. Specifically binds the 7SK snRNA (7SK RNA) and acts as a core component of the 7SK ribonucleoprotein (RNP) complex, thereby acting as a negative regulator of transcription elongation by RNA polymerase II. The 7SK RNP complex sequesters the positive transcription elongation factor b (P-TEFb) in a large inactive 7SK RNP complex preventing RNA polymerase II phosphorylation and subsequent transcriptional elongation. The 7SK RNP complex also promotes snRNA gene transcription by RNA polymerase II via interaction with the little elongation complex (LEC). LARP7 specifically binds to the highly conserved 3'-terminal U-rich stretch of 7SK RNA; on stimulation, remains associated with 7SK RNA, whereas P-TEFb is released from the complex. LARP7 also acts as a regulator of mRNA splicing fidelity by promoting U6 snRNA processing. Specifically binds U6 snRNAs and associates with a subset of box C/D RNP complexes: promotes U6 snRNA 2'-O-methylation by facilitating U6 snRNA loading into box C/D RNP complexes. U6 snRNA 2'-O-methylation is required for mRNA splicing fidelity. This Danio rerio (Zebrafish) protein is La-related protein 7.